A 529-amino-acid polypeptide reads, in one-letter code: Phenylalanine N-monooxygenase (529 aa).

Residues 1 to 21 (MLDSTPMLAFIIGLLLLALTM) form a helical membrane-spanning segment. Cysteine 467 provides a ligand contact to heme.

It belongs to the cytochrome P450 family. Heme is required as a cofactor.

The protein localises to the endoplasmic reticulum membrane. It carries out the reaction L-phenylalanine + 2 reduced [NADPH--hemoprotein reductase] + 2 O2 = (E)-phenylacetaldehyde oxime + 2 oxidized [NADPH--hemoprotein reductase] + CO2 + 3 H2O + 2 H(+). The protein operates within secondary metabolite biosynthesis; phenylglucosinolate biosynthesis. Converts L-phenylalanine into phenylacetaldoxime, the precursor of benzylglucosinolate (glucotropeolin). The sequence is that of Phenylalanine N-monooxygenase (CYP79A2) from Arabidopsis thaliana (Mouse-ear cress).